A 308-amino-acid polypeptide reads, in one-letter code: tRNA pseudouridine synthase B (308 aa).

Asp-47 serves as the catalytic Nucleophile.

This sequence belongs to the pseudouridine synthase TruB family. Type 1 subfamily.

The enzyme catalyses uridine(55) in tRNA = pseudouridine(55) in tRNA. Responsible for synthesis of pseudouridine from uracil-55 in the psi GC loop of transfer RNAs. The sequence is that of tRNA pseudouridine synthase B from Rhodospirillum rubrum (strain ATCC 11170 / ATH 1.1.1 / DSM 467 / LMG 4362 / NCIMB 8255 / S1).